Here is a 227-residue protein sequence, read N- to C-terminus: 2-C-methyl-D-erythritol 4-phosphate cytidylyltransferase (227 aa).

Belongs to the IspD/TarI cytidylyltransferase family. IspD subfamily.

The enzyme catalyses 2-C-methyl-D-erythritol 4-phosphate + CTP + H(+) = 4-CDP-2-C-methyl-D-erythritol + diphosphate. Its pathway is isoprenoid biosynthesis; isopentenyl diphosphate biosynthesis via DXP pathway; isopentenyl diphosphate from 1-deoxy-D-xylulose 5-phosphate: step 2/6. In terms of biological role, catalyzes the formation of 4-diphosphocytidyl-2-C-methyl-D-erythritol from CTP and 2-C-methyl-D-erythritol 4-phosphate (MEP). The protein is 2-C-methyl-D-erythritol 4-phosphate cytidylyltransferase of Petrotoga mobilis (strain DSM 10674 / SJ95).